Here is a 312-residue protein sequence, read N- to C-terminus: ADP-L-glycero-D-manno-heptose-6-epimerase (312 aa).

Residues 10-11 (FI), 31-32 (DN), lysine 38, lysine 53, 75-79 (EGACS), and asparagine 92 contribute to the NADP(+) site. Tyrosine 140 serves as the catalytic Proton acceptor. Lysine 144 contributes to the NADP(+) binding site. A substrate-binding site is contributed by asparagine 169. 2 residues coordinate NADP(+): valine 170 and lysine 178. Lysine 178 serves as the catalytic Proton acceptor. Residues serine 180, histidine 187, 201–204 (FEGS), arginine 209, and tyrosine 274 contribute to the substrate site.

This sequence belongs to the NAD(P)-dependent epimerase/dehydratase family. HldD subfamily. Homopentamer. NADP(+) is required as a cofactor.

It carries out the reaction ADP-D-glycero-beta-D-manno-heptose = ADP-L-glycero-beta-D-manno-heptose. It functions in the pathway nucleotide-sugar biosynthesis; ADP-L-glycero-beta-D-manno-heptose biosynthesis; ADP-L-glycero-beta-D-manno-heptose from D-glycero-beta-D-manno-heptose 7-phosphate: step 4/4. Catalyzes the interconversion between ADP-D-glycero-beta-D-manno-heptose and ADP-L-glycero-beta-D-manno-heptose via an epimerization at carbon 6 of the heptose. This Proteus mirabilis (strain HI4320) protein is ADP-L-glycero-D-manno-heptose-6-epimerase.